A 457-amino-acid chain; its full sequence is tRNA-2-methylthio-N(6)-dimethylallyladenosine synthase (457 aa).

Positions 4–119 (RNFHIITFGC…APDAIERLYA (116 aa)) constitute an MTTase N-terminal domain. Positions 13, 48, 82, 164, 168, and 171 each coordinate [4Fe-4S] cluster. In terms of domain architecture, Radical SAM core spans 150–385 (NTLALMAYVN…QATQLEHSTS (236 aa)). The TRAM domain maps to 388–456 (KSRVGVETTV…KHSLVAEPLI (69 aa)).

Belongs to the methylthiotransferase family. MiaB subfamily. As to quaternary structure, monomer. Requires [4Fe-4S] cluster as cofactor.

The protein localises to the cytoplasm. It catalyses the reaction N(6)-dimethylallyladenosine(37) in tRNA + (sulfur carrier)-SH + AH2 + 2 S-adenosyl-L-methionine = 2-methylsulfanyl-N(6)-dimethylallyladenosine(37) in tRNA + (sulfur carrier)-H + 5'-deoxyadenosine + L-methionine + A + S-adenosyl-L-homocysteine + 2 H(+). Functionally, catalyzes the methylthiolation of N6-(dimethylallyl)adenosine (i(6)A), leading to the formation of 2-methylthio-N6-(dimethylallyl)adenosine (ms(2)i(6)A) at position 37 in tRNAs that read codons beginning with uridine. This Lawsonia intracellularis (strain PHE/MN1-00) protein is tRNA-2-methylthio-N(6)-dimethylallyladenosine synthase.